The sequence spans 193 residues: Adenine phosphoribosyltransferase (193 aa).

This sequence belongs to the purine/pyrimidine phosphoribosyltransferase family. Homodimer.

The protein localises to the cytoplasm. The enzyme catalyses AMP + diphosphate = 5-phospho-alpha-D-ribose 1-diphosphate + adenine. It functions in the pathway purine metabolism; AMP biosynthesis via salvage pathway; AMP from adenine: step 1/1. In terms of biological role, catalyzes a salvage reaction resulting in the formation of AMP, that is energically less costly than de novo synthesis. This chain is Adenine phosphoribosyltransferase, found in Bifidobacterium adolescentis (strain ATCC 15703 / DSM 20083 / NCTC 11814 / E194a).